The following is a 128-amino-acid chain: Large ribosomal subunit protein bL19 (128 aa).

This sequence belongs to the bacterial ribosomal protein bL19 family.

Its function is as follows. This protein is located at the 30S-50S ribosomal subunit interface and may play a role in the structure and function of the aminoacyl-tRNA binding site. This chain is Large ribosomal subunit protein bL19, found in Azoarcus sp. (strain BH72).